The sequence spans 239 residues: Chaperone protein PapD (239 aa).

A signal peptide spans 1-21 (MIRKKILMAAIPLFVISGADA). Cysteines 228 and 233 form a disulfide.

This sequence belongs to the periplasmic pilus chaperone family. Interacts with substrates PapG and PapK.

The protein resides in the periplasm. Functionally, binds and caps interactive surfaces on P pilus subunits to prevent them from participating in non-productive interactions. Facilitates the import of P pilus subunits into the periplasm, probably also facilitates their folding. Chaperone-subunit complexes are then targeted to the PapC outer membrane usher where the chaperone must uncap from the subunits. Coexpression of this chaperone with individual, otherwise toxic, P pilus subunits (tested with PapA, PapE and PapG) suppresses their growth inhibitory phenotype. This is Chaperone protein PapD (papD) from Escherichia coli.